The primary structure comprises 371 residues: Peptide chain release factor 2 (371 aa).

Gln-253 carries the post-translational modification N5-methylglutamine.

It belongs to the prokaryotic/mitochondrial release factor family. In terms of processing, methylated by PrmC. Methylation increases the termination efficiency of RF2.

It is found in the cytoplasm. Peptide chain release factor 2 directs the termination of translation in response to the peptide chain termination codons UGA and UAA. This chain is Peptide chain release factor 2, found in Mycobacterium marinum (strain ATCC BAA-535 / M).